A 433-amino-acid polypeptide reads, in one-letter code: 28S rRNA (cytosine-C(5))-methyltransferase (433 aa).

Residues 235 to 241, E259, D286, and D304 each bind S-adenosyl-L-methionine; that span reads CAAPGMK. The Nucleophile role is filled by C357.

This sequence belongs to the class I-like SAM-binding methyltransferase superfamily. RsmB/NOP family.

The catalysed reaction is a cytidine in 28S rRNA + S-adenosyl-L-methionine = a 5-methylcytidine in 28S rRNA + S-adenosyl-L-homocysteine + H(+). Its function is as follows. S-adenosyl-L-methionine-dependent methyltransferase that specifically methylates the C(5) position of a cytosine in 28S rRNA. In Drosophila melanogaster (Fruit fly), this protein is 28S rRNA (cytosine-C(5))-methyltransferase.